Reading from the N-terminus, the 170-residue chain is MTRYDDLPYRTCVGMMLINERGLVFVGRRAGVEQVDDSYVWQMPQGGVDPGEDTWLAAKRELYEETSVRSIEKLAEIPDWLTYDIPRVVAGRAWKGRYRGQRQKWYAVRFIGEDNEINIANPGDGHKPEFTAWRWEPMQNLTGLIIPFKRPVYERVVKEFASLAGAQAGT.

The region spanning 8 to 158 is the Nudix hydrolase domain; sequence PYRTCVGMML…KRPVYERVVK (151 aa). The Nudix box signature appears at 46–67; it reads GGVDPGEDTWLAAKRELYEETS.

This sequence belongs to the Nudix hydrolase family. RppH subfamily. The cofactor is a divalent metal cation.

Accelerates the degradation of transcripts by removing pyrophosphate from the 5'-end of triphosphorylated RNA, leading to a more labile monophosphorylated state that can stimulate subsequent ribonuclease cleavage. The sequence is that of RNA pyrophosphohydrolase from Nitrobacter winogradskyi (strain ATCC 25391 / DSM 10237 / CIP 104748 / NCIMB 11846 / Nb-255).